We begin with the raw amino-acid sequence, 188 residues long: Peptidyl-tRNA hydrolase (188 aa).

Tyrosine 14 contributes to the tRNA binding site. Catalysis depends on histidine 19, which acts as the Proton acceptor. TRNA contacts are provided by tyrosine 64, asparagine 66, and asparagine 113.

This sequence belongs to the PTH family. In terms of assembly, monomer.

Its subcellular location is the cytoplasm. The catalysed reaction is an N-acyl-L-alpha-aminoacyl-tRNA + H2O = an N-acyl-L-amino acid + a tRNA + H(+). Functionally, hydrolyzes ribosome-free peptidyl-tRNAs (with 1 or more amino acids incorporated), which drop off the ribosome during protein synthesis, or as a result of ribosome stalling. Catalyzes the release of premature peptidyl moieties from peptidyl-tRNA molecules trapped in stalled 50S ribosomal subunits, and thus maintains levels of free tRNAs and 50S ribosomes. This is Peptidyl-tRNA hydrolase from Chloroflexus aurantiacus (strain ATCC 29364 / DSM 637 / Y-400-fl).